The primary structure comprises 410 residues: 2-epi-5-epi-valiolone synthase (410 aa).

NAD(+) is bound by residues aspartate 66, 97–100, 130–134, 154–155, lysine 167, lysine 176, and 194–197; these read ETLK, GVLMD, TT, and FLAT. The active site involves lysine 167. Glutamate 209, histidine 280, and histidine 296 together coordinate a divalent metal cation.

The protein belongs to the sugar phosphate cyclases superfamily. EEVS family. NAD(+) is required as a cofactor. Requires Co(2+) as cofactor.

The enzyme catalyses D-sedoheptulose 7-phosphate = 2-epi-5-epi-valiolone + phosphate. Catalyzes the cyclization of D-sedoheptulose 7-phosphate to 2-epi-5-epi-valiolone. Involved in salbostatin biosynthesis. This Streptomyces albus (strain ATCC 21838 / DSM 41398 / FERM P-419 / JCM 4703 / NBRC 107858) protein is 2-epi-5-epi-valiolone synthase.